The following is a 516-amino-acid chain: Bifunctional purine biosynthesis protein PurH (516 aa).

The 146-residue stretch at 1 to 146 (MAPFALLSVS…KNHADVAVLT (146 aa)) folds into the MGS-like domain.

Belongs to the PurH family.

The enzyme catalyses (6R)-10-formyltetrahydrofolate + 5-amino-1-(5-phospho-beta-D-ribosyl)imidazole-4-carboxamide = 5-formamido-1-(5-phospho-D-ribosyl)imidazole-4-carboxamide + (6S)-5,6,7,8-tetrahydrofolate. The catalysed reaction is IMP + H2O = 5-formamido-1-(5-phospho-D-ribosyl)imidazole-4-carboxamide. The protein operates within purine metabolism; IMP biosynthesis via de novo pathway; 5-formamido-1-(5-phospho-D-ribosyl)imidazole-4-carboxamide from 5-amino-1-(5-phospho-D-ribosyl)imidazole-4-carboxamide (10-formyl THF route): step 1/1. It functions in the pathway purine metabolism; IMP biosynthesis via de novo pathway; IMP from 5-formamido-1-(5-phospho-D-ribosyl)imidazole-4-carboxamide: step 1/1. This chain is Bifunctional purine biosynthesis protein PurH, found in Parasynechococcus marenigrum (strain WH8102).